We begin with the raw amino-acid sequence, 151 residues long: Ribosome maturation factor RimP (151 aa).

The protein belongs to the RimP family.

Its subcellular location is the cytoplasm. Required for maturation of 30S ribosomal subunits. The polypeptide is Ribosome maturation factor RimP (Haemophilus influenzae (strain PittGG)).